A 341-amino-acid chain; its full sequence is tRNA N6-adenosine threonylcarbamoyltransferase (341 aa).

Fe cation-binding residues include His111 and His115. Residues 134-138, Asp167, Gly180, and Asn270 contribute to the substrate site; that span reads LVSGG. Fe cation is bound at residue Asp298.

It belongs to the KAE1 / TsaD family. Fe(2+) is required as a cofactor.

It is found in the cytoplasm. It catalyses the reaction L-threonylcarbamoyladenylate + adenosine(37) in tRNA = N(6)-L-threonylcarbamoyladenosine(37) in tRNA + AMP + H(+). In terms of biological role, required for the formation of a threonylcarbamoyl group on adenosine at position 37 (t(6)A37) in tRNAs that read codons beginning with adenine. Is involved in the transfer of the threonylcarbamoyl moiety of threonylcarbamoyl-AMP (TC-AMP) to the N6 group of A37, together with TsaE and TsaB. TsaD likely plays a direct catalytic role in this reaction. This Thiobacillus denitrificans (strain ATCC 25259 / T1) protein is tRNA N6-adenosine threonylcarbamoyltransferase.